A 126-amino-acid chain; its full sequence is Small ribosomal subunit protein uS8 (126 aa).

Belongs to the universal ribosomal protein uS8 family. Part of the 30S ribosomal subunit. Contacts proteins S5 and S12.

One of the primary rRNA binding proteins, it binds directly to 16S rRNA central domain where it helps coordinate assembly of the platform of the 30S subunit. The chain is Small ribosomal subunit protein uS8 from Nitratidesulfovibrio vulgaris (strain ATCC 29579 / DSM 644 / CCUG 34227 / NCIMB 8303 / VKM B-1760 / Hildenborough) (Desulfovibrio vulgaris).